The primary structure comprises 158 residues: 6,7-dimethyl-8-ribityllumazine synthase (158 aa).

Residues F23, 61–63 (SFE), and 85–87 (AVI) contribute to the 5-amino-6-(D-ribitylamino)uracil site. 90 to 91 (DT) contributes to the (2S)-2-hydroxy-3-oxobutyl phosphate binding site. H93 acts as the Proton donor in catalysis. A 5-amino-6-(D-ribitylamino)uracil-binding site is contributed by F118. R132 contacts (2S)-2-hydroxy-3-oxobutyl phosphate.

The protein belongs to the DMRL synthase family.

It carries out the reaction (2S)-2-hydroxy-3-oxobutyl phosphate + 5-amino-6-(D-ribitylamino)uracil = 6,7-dimethyl-8-(1-D-ribityl)lumazine + phosphate + 2 H2O + H(+). It functions in the pathway cofactor biosynthesis; riboflavin biosynthesis; riboflavin from 2-hydroxy-3-oxobutyl phosphate and 5-amino-6-(D-ribitylamino)uracil: step 1/2. In terms of biological role, catalyzes the formation of 6,7-dimethyl-8-ribityllumazine by condensation of 5-amino-6-(D-ribitylamino)uracil with 3,4-dihydroxy-2-butanone 4-phosphate. This is the penultimate step in the biosynthesis of riboflavin. This is 6,7-dimethyl-8-ribityllumazine synthase from Prochlorococcus marinus (strain NATL2A).